Consider the following 464-residue polypeptide: Sensor protein IrlS (464 aa).

The Periplasmic segment spans residues 1–13; that stretch reads MIRRLLPRTLRAR. Residues 14–34 form a helical membrane-spanning segment; the sequence is LTALIILSTAATLALSGVALY. Topologically, residues 35-166 are cytoplasmic; that stretch reads SALHNRLVGM…DHALLRAYAY (132 aa). The chain crosses the membrane as a helical span at residues 167–187; that stretch reads TVVVIEVLAVVLTAALAYGIA. The region spanning 188-241 is the HAMP domain; sequence MLGLSPLRRLVARAEQMSSSRLAQPLPELDTSGELKEMEHAFNAMLKRLDESFV. Residues 188-464 are Periplasmic-facing; it reads MLGLSPLRRL…FWLKFPAHAA (277 aa). In terms of domain architecture, Histidine kinase spans 249–463; that stretch reads NLAHDMRTPL…TFWLKFPAHA (215 aa). Position 252 is a phosphohistidine; by autocatalysis (histidine 252).

It localises to the cell inner membrane. It carries out the reaction ATP + protein L-histidine = ADP + protein N-phospho-L-histidine.. Member of the two-component regulatory system IrlR/IrlS. May be involved in invasion of eukaryotic cells and heavy-metal resistance. Probably activates IrlR by phosphorylation. This is Sensor protein IrlS (irlS) from Burkholderia pseudomallei (strain K96243).